Reading from the N-terminus, the 205-residue chain is Holliday junction branch migration complex subunit RuvA (205 aa).

The interval 1–64 (MIGKLKGIID…EDQIKLFGFR (64 aa)) is domain I. The segment at 65 to 143 (TDTEREWFRL…ALSAVDPAVV (79 aa)) is domain II. The segment at 144–154 (KLSGAIDDNRA) is flexible linker. Residues 154–205 (APRAVTDAISALVNLGYGQPQAAAAVATASRTAGEDAETAQLIKLGLKELSK) are domain III.

It belongs to the RuvA family. Homotetramer. Forms an RuvA(8)-RuvB(12)-Holliday junction (HJ) complex. HJ DNA is sandwiched between 2 RuvA tetramers; dsDNA enters through RuvA and exits via RuvB. An RuvB hexamer assembles on each DNA strand where it exits the tetramer. Each RuvB hexamer is contacted by two RuvA subunits (via domain III) on 2 adjacent RuvB subunits; this complex drives branch migration. In the full resolvosome a probable DNA-RuvA(4)-RuvB(12)-RuvC(2) complex forms which resolves the HJ.

Its subcellular location is the cytoplasm. Functionally, the RuvA-RuvB-RuvC complex processes Holliday junction (HJ) DNA during genetic recombination and DNA repair, while the RuvA-RuvB complex plays an important role in the rescue of blocked DNA replication forks via replication fork reversal (RFR). RuvA specifically binds to HJ cruciform DNA, conferring on it an open structure. The RuvB hexamer acts as an ATP-dependent pump, pulling dsDNA into and through the RuvAB complex. HJ branch migration allows RuvC to scan DNA until it finds its consensus sequence, where it cleaves and resolves the cruciform DNA. The protein is Holliday junction branch migration complex subunit RuvA of Rhodopseudomonas palustris (strain TIE-1).